The chain runs to 151 residues: Myosin light polypeptide 6 (151 aa).

Cysteine 2 carries the N-acetylcysteine modification. Positions 7 to 42 (DQTAEFKEAFQLFDRTGDGKILYSQCGDVMRALGQN) constitute an EF-hand 1 domain. Serine 57 bears the Phosphoserine mark. Position 81 is an N6-acetyllysine (lysine 81). 2 EF-hand domains span residues 84–119 (GTYE…LGEK) and 119–151 (KMTE…VLNG).

In terms of assembly, myosin is a hexamer of 2 heavy chains and 4 light chains. Interacts with SPATA6.

Regulatory light chain of myosin. Does not bind calcium. The chain is Myosin light polypeptide 6 (Myl6) from Rattus norvegicus (Rat).